The primary structure comprises 1082 residues: TNF receptor-associated factor homolog 1b (1082 aa).

Positions Met1–Asp54 are disordered. Ala2 is subject to N-acetylalanine. The segment covering Trp33–Ser49 has biased composition (polar residues). The MATH domain maps to Tyr67 to Val198. Disordered stretches follow at residues Leu358 to Glu388, Thr440 to Gly666, Ser697 to Leu762, Leu780 to Ile800, Ser812 to Thr841, and Ser858 to Ser889. Composition is skewed to basic and acidic residues over residues Pro359–Glu388 and Thr440–Lys453. The stretch at Arg446–Lys507 forms a coiled coil. Residues Lys454–Asp471 are compositionally biased toward basic residues. The segment covering Lys472 to Glu488 has biased composition (basic and acidic residues). Low complexity-rich tracts occupy residues Gly519 to Ile534 and Ser560 to Ser573. Composition is skewed to polar residues over residues Asp588–Lys630 and Gln645–Gly666. 2 stretches are compositionally biased toward low complexity: residues Ser858 to Gly871 and Pro878 to Ser889.

In terms of assembly, forms homooligomers. Interacts with SNC1, RPS2 and CPR1/CPR30. Interacts with ATG6.

The protein localises to the cytoplasm. It localises to the cell membrane. Functions redundantly with TRAF1A in the regulation of plant immune response. Contributes to the turnover of the nucleotide-binding domain and leucine-rich repeat-containing (NB-LRR) immune receptors SNC1 and RPS2. May associate with an E3 ubiquitin-protein ligase complex, which modulates ubiquitination and subsequent degradation of NB-LRR immune sensors to maintain their homeostasis. Functions redundantly with TRAF1A in the regulation of autophagosome formation. Required for SINAT1- and SINAT2-mediated ubiquitination and destabilization of ATG6. Functions as a molecular adapter that helps to regulate autophagy by modulating ATG6 stability. In Arabidopsis thaliana (Mouse-ear cress), this protein is TNF receptor-associated factor homolog 1b.